A 225-amino-acid chain; its full sequence is UPF0758 protein Shew_3481 (225 aa).

An MPN domain is found at 102–224; sequence ILSDPDLTRD…IVSFAERGWI (123 aa). The Zn(2+) site is built by histidine 173, histidine 175, and aspartate 186. A JAMM motif motif is present at residues 173 to 186; sequence HNHPSGGAEPSHAD.

The protein belongs to the UPF0758 family.

The protein is UPF0758 protein Shew_3481 of Shewanella loihica (strain ATCC BAA-1088 / PV-4).